Reading from the N-terminus, the 79-residue chain is Protein FAM236A (79 aa).

It belongs to the FAM236 family.

This Homo sapiens (Human) protein is Protein FAM236A.